We begin with the raw amino-acid sequence, 400 residues long: Glutamyl-tRNA reductase (400 aa).

Substrate-binding positions include 45-48, Ser103, 108-110, and Gln114; these read TCNR and EDQ. Cys46 acts as the Nucleophile in catalysis. Residue 179-184 coordinates NADP(+); sequence GYGEIG.

The protein belongs to the glutamyl-tRNA reductase family. Homodimer.

It carries out the reaction (S)-4-amino-5-oxopentanoate + tRNA(Glu) + NADP(+) = L-glutamyl-tRNA(Glu) + NADPH + H(+). Its pathway is porphyrin-containing compound metabolism; protoporphyrin-IX biosynthesis; 5-aminolevulinate from L-glutamyl-tRNA(Glu): step 1/2. Catalyzes the NADPH-dependent reduction of glutamyl-tRNA(Glu) to glutamate 1-semialdehyde (GSA). This Clostridium perfringens (strain ATCC 13124 / DSM 756 / JCM 1290 / NCIMB 6125 / NCTC 8237 / Type A) protein is Glutamyl-tRNA reductase.